A 322-amino-acid polypeptide reads, in one-letter code: UDP-galactose transporter homolog 1 (322 aa).

5 consecutive transmembrane segments (helical) span residues 4–24 (FMRQLFVCMIGIYGSFLSWAV), 43–63 (ALLSLAQSFMTVLCGLLWNWF), 76–96 (FLGYFSSIAISASLSSYFGYA), 105–125 (TVILGKSCKLLPVIALHVFVY), and 129–149 (FPPHKYLIVTMITAGVSIFSY). N-linked (GlcNAc...) asparagine glycosylation is present at N152. 4 helical membrane-spanning segments follow: residues 164–184 (SPIGLLLLFFNLLMDGITNTT), 199–219 (MMIAVNLGIACLNGLYLISPF), 250–270 (LFIFFTLEKFGSITLVTITLT), and 290–310 (IQWLGILLVFLGISLEAGLKI). N-linked (GlcNAc...) asparagine glycosylation is found at N313 and N314.

This sequence belongs to the nucleotide-sugar transporter family. SLC35B subfamily.

The protein localises to the endoplasmic reticulum membrane. In terms of biological role, may be involved in specific transport of UDP-Gal from the cytosol to the Golgi lumen. Involved in the maintenance of optimal conditions for the folding of secretory pathway proteins in the endoplasmic reticulum. This chain is UDP-galactose transporter homolog 1 (hut1), found in Schizosaccharomyces pombe (strain 972 / ATCC 24843) (Fission yeast).